Reading from the N-terminus, the 406-residue chain is Cholinephosphotransferase 1 (406 aa).

An N-acetylalanine modification is found at Ala2. Topologically, residues 2–62 are cytoplasmic; it reads AAGAGARPAP…LLQWIPLWMA (61 aa). A helical membrane pass occupies residues 63 to 83; it reads PNSITLLGLAINMLTTLVLIS. Asn64 serves as a coordination point for CDP-choline. The Lumenal portion of the chain corresponds to 84–93; it reads YCPTVTEEAP. A helical transmembrane segment spans residues 94–118; the sequence is YWTYLLCALGLFIYQSLDAIDGKQA. Positions 111 and 114 each coordinate Mg(2+). Position 119 (Arg119) interacts with CDP-choline. Residues 119–125 lie on the Cytoplasmic side of the membrane; the sequence is RRTNSCS. A helical membrane pass occupies residues 126-150; sequence PLGELFDHGCDSLSTVFMAVGASIA. Asp132 serves as a coordination point for Mg(2+). His133 acts as the Proton acceptor in catalysis. Asp136 is a binding site for Mg(2+). Residues 151-160 lie on the Lumenal side of the membrane; the sequence is VRLGTHPDWL. The helical transmembrane segment at 161 to 179 threads the bilayer; the sequence is FFCSFIGMFMFYCAHWQTY. Over 180 to 190 the chain is Cytoplasmic; sequence VSGVLRFGKVD. A helical transmembrane segment spans residues 191–207; sequence VTEIQIALVIVFVLSTF. Residues 208 to 222 lie on the Lumenal side of the membrane; sequence GGATMWDYTIPILEI. A helical transmembrane segment spans residues 223–248; sequence KLKILPVLGVVGGAIFSCSNYFHVIL. Topologically, residues 249 to 265 are cytoplasmic; sequence HGGVGKNGSTIAGTSVL. Residues 266-281 traverse the membrane as a helical segment; that stretch reads SPGLHIGIIIILAIMI. The Lumenal portion of the chain corresponds to 282 to 293; the sequence is YKKSATNLFEKH. Residues 294-316 traverse the membrane as a helical segment; that stretch reads PCLYTLMFGCVFAKVSQKLVIAH. Residues 317 to 329 are Cytoplasmic-facing; it reads MTKSELYLQDTVF. Residues 330–339 form a helical membrane-spanning segment; that stretch reads IGPGLLFLDQ. Residues 340 to 346 lie on the Lumenal side of the membrane; that stretch reads YFNNFVD. A helical membrane pass occupies residues 347 to 376; the sequence is EYIVLWIAMVISSLDMMRYFSALCLQISRH. At 377–406 the chain is on the cytoplasmic side; the sequence is LHLSIFKTSCHQAPEQVQVLPPKSHQNNMD.

This sequence belongs to the CDP-alcohol phosphatidyltransferase class-I family. Mg(2+) serves as cofactor. Requires Mn(2+) as cofactor.

Its subcellular location is the golgi apparatus membrane. The catalysed reaction is CDP-choline + a 1,2-diacyl-sn-glycerol = a 1,2-diacyl-sn-glycero-3-phosphocholine + CMP + H(+). It carries out the reaction 1-octadecanoyl-2-(5Z,8Z,11Z,14Z-eicosatetraenoyl)-sn-glycerol + CDP-choline = 1-octadecanoyl-2-(5Z,8Z,11Z,14Z-eicosatetraenoyl)-sn-glycero-3-phosphocholine + CMP + H(+). The enzyme catalyses 1-hexadecanoyl-2-(9Z-octadecenoyl)-sn-glycerol + CDP-choline = 1-hexadecanoyl-2-(9Z-octadecenoyl)-sn-glycero-3-phosphocholine + CMP + H(+). It catalyses the reaction 1-hexadecanoyl-2-(4Z,7Z,10Z,13Z,16Z,19Z-docosahexaenoyl)-sn-glycerol + CDP-choline = 1-hexadecanoyl-2-(4Z,7Z,10Z,13Z,16Z,19Z-docosahexaenoyl)-sn-glycero-3-phosphocholine + CMP + H(+). The catalysed reaction is 1,2-dioctanoyl-sn-glycerol + CDP-choline = 1,2-dioctanoyl-sn-glycero-3-phosphocholine + CMP + H(+). It participates in phospholipid metabolism; phosphatidylcholine biosynthesis; phosphatidylcholine from phosphocholine: step 2/2. Catalyzes the final step of de novo phosphatidylcholine (PC) synthesis, i.e. the transfer of choline phosphate from CDP-choline to the free hydroxyl of a diacylglycerol (DAG), producing a PC. It thereby plays a central role in the formation and maintenance of vesicular membranes. The chain is Cholinephosphotransferase 1 (CHPT1) from Bos taurus (Bovine).